A 352-amino-acid chain; its full sequence is Protein RecA (352 aa).

ATP is bound at residue 67–74 (GPESSGKT).

The protein belongs to the RecA family.

Its subcellular location is the cytoplasm. Its function is as follows. Can catalyze the hydrolysis of ATP in the presence of single-stranded DNA, the ATP-dependent uptake of single-stranded DNA by duplex DNA, and the ATP-dependent hybridization of homologous single-stranded DNAs. It interacts with LexA causing its activation and leading to its autocatalytic cleavage. This Chlamydia trachomatis serovar D (strain ATCC VR-885 / DSM 19411 / UW-3/Cx) protein is Protein RecA.